A 698-amino-acid polypeptide reads, in one-letter code: UvrABC system protein B (698 aa).

A Helicase ATP-binding domain is found at 25 to 183 (NGLNSGLVHQ…TLIDLQFERN (159 aa)). Residue 38–45 (GATGTGKT) participates in ATP binding. The short motif at 91 to 114 (YYDAYTPEAYVPSKDLYIEKEAQI) is the Beta-hairpin element. The 167-residue stretch at 428–594 (QIDDLLGEIK…GIVKAVRDLT (167 aa)) folds into the Helicase C-terminal domain. In terms of domain architecture, UVR spans 622–657 (FKVINALEKQMKQAAKDLEFEKAALLRDQLTEMRQT).

It belongs to the UvrB family. As to quaternary structure, forms a heterotetramer with UvrA during the search for lesions. Interacts with UvrC in an incision complex.

The protein resides in the cytoplasm. Functionally, the UvrABC repair system catalyzes the recognition and processing of DNA lesions. A damage recognition complex composed of 2 UvrA and 2 UvrB subunits scans DNA for abnormalities. Upon binding of the UvrA(2)B(2) complex to a putative damaged site, the DNA wraps around one UvrB monomer. DNA wrap is dependent on ATP binding by UvrB and probably causes local melting of the DNA helix, facilitating insertion of UvrB beta-hairpin between the DNA strands. Then UvrB probes one DNA strand for the presence of a lesion. If a lesion is found the UvrA subunits dissociate and the UvrB-DNA preincision complex is formed. This complex is subsequently bound by UvrC and the second UvrB is released. If no lesion is found, the DNA wraps around the other UvrB subunit that will check the other stand for damage. In Herpetosiphon aurantiacus (strain ATCC 23779 / DSM 785 / 114-95), this protein is UvrABC system protein B.